The following is a 235-amino-acid chain: Carbohydrate deacetylase (235 aa).

Residues histidine 61 and histidine 124 each contribute to the Mg(2+) site.

The protein belongs to the YdjC deacetylase family. The cofactor is Mg(2+).

Probably catalyzes the deacetylation of acetylated carbohydrates an important step in the degradation of oligosaccharides. The protein is Carbohydrate deacetylase of Bacillus cereus (strain 03BB102).